A 186-amino-acid chain; its full sequence is Translation initiation factor IF-3 (186 aa).

Belongs to the IF-3 family. Monomer.

It localises to the cytoplasm. IF-3 binds to the 30S ribosomal subunit and shifts the equilibrium between 70S ribosomes and their 50S and 30S subunits in favor of the free subunits, thus enhancing the availability of 30S subunits on which protein synthesis initiation begins. This chain is Translation initiation factor IF-3, found in Borreliella afzelii (strain PKo) (Borrelia afzelii).